We begin with the raw amino-acid sequence, 1361 residues long: Protein transport protein SEC16B homolog (1361 aa).

At Ser46 the chain carries Phosphoserine. 7 disordered regions span residues 82–109 (NEGASGSVGEDEPSSIAPEAVQFPHSDA), 487–513 (VDDAPQSFQSSQLFSPSAGRSSDGRPP), 984–1013 (PVGGMPPPAPHSTKGNLQGNEYQHQQQEAT), 1025–1062 (SSLMPPASVEPTHESGGSGRRMAVHTRSVSEPDFGRTP), 1163–1204 (ENKS…ARGR), 1216–1235 (NPPGRGNSHTMIPSPSVQTA), and 1306–1361 (SVNG…EVEL). The segment covering 491–503 (PQSFQSSQLFSPS) has biased composition (low complexity). Residues 996–1013 (TKGNLQGNEYQHQQQEAT) show a composition bias toward polar residues. 3 stretches are compositionally biased toward polar residues: residues 1169-1200 (IPSNGNWSSGGPTPSENSSGIPPISHGSNQFS), 1222-1234 (NSHTMIPSPSVQT), and 1308-1325 (NGDNHQPPTSRRTASWSG). A compositionally biased stretch (low complexity) spans 1326-1354 (NFNTSFTPPTSPSTFKPVLLNSSSSSLGE).

It belongs to the SEC16 family.

It localises to the golgi apparatus. The protein localises to the endoplasmic reticulum. In terms of biological role, required for protein transport from the endoplasmic reticulum to the Golgi apparatus. The polypeptide is Protein transport protein SEC16B homolog (Arabidopsis thaliana (Mouse-ear cress)).